The primary structure comprises 194 residues: Crossover junction endodeoxyribonuclease RuvC (194 aa).

Active-site residues include aspartate 7, glutamate 68, and aspartate 141. Aspartate 7, glutamate 68, and aspartate 141 together coordinate Mg(2+).

The protein belongs to the RuvC family. In terms of assembly, homodimer which binds Holliday junction (HJ) DNA. The HJ becomes 2-fold symmetrical on binding to RuvC with unstacked arms; it has a different conformation from HJ DNA in complex with RuvA. In the full resolvosome a probable DNA-RuvA(4)-RuvB(12)-RuvC(2) complex forms which resolves the HJ. The cofactor is Mg(2+).

It is found in the cytoplasm. It catalyses the reaction Endonucleolytic cleavage at a junction such as a reciprocal single-stranded crossover between two homologous DNA duplexes (Holliday junction).. Functionally, the RuvA-RuvB-RuvC complex processes Holliday junction (HJ) DNA during genetic recombination and DNA repair. Endonuclease that resolves HJ intermediates. Cleaves cruciform DNA by making single-stranded nicks across the HJ at symmetrical positions within the homologous arms, yielding a 5'-phosphate and a 3'-hydroxyl group; requires a central core of homology in the junction. The consensus cleavage sequence is 5'-(A/T)TT(C/G)-3'. Cleavage occurs on the 3'-side of the TT dinucleotide at the point of strand exchange. HJ branch migration catalyzed by RuvA-RuvB allows RuvC to scan DNA until it finds its consensus sequence, where it cleaves and resolves the cruciform DNA. The protein is Crossover junction endodeoxyribonuclease RuvC of Bifidobacterium longum (strain DJO10A).